A 362-amino-acid chain; its full sequence is Innexin inx1 (362 aa).

Residues 1–28 (MYKLLGSLKSYLKWQDIQTDNAVFRLHN) are Cytoplasmic-facing. The chain crosses the membrane as a helical span at residues 29–49 (SFTTVLLLTCSLIITATQYVG). At 50–110 (QPISCIVNGV…DAKKYYTYYQ (61 aa)) the chain is on the extracellular side. The helical transmembrane segment at 111-131 (WVCFVLFFQAMACYTPKFLWN) threads the bilayer. The Cytoplasmic portion of the chain corresponds to 132 to 177 (KFEGGLMRMIVMGLNITICTREEKEAKRDALLDYLIKHVKRHKLYA). Residues 178 to 198 (IRYWACEFLCCINIIVQMYLM) traverse the membrane as a helical segment. Residues 199 to 267 (NRFFDGEFLS…LPLNIVNEKT (69 aa)) lie on the Extracellular side of the membrane. The chain crosses the membrane as a helical span at residues 268-288 (YVFIWFWFWILLVLLIGLIVF). Residues 289–362 (RGCIIFMPKF…VEPSKHDRAK (74 aa)) lie on the Cytoplasmic side of the membrane.

This sequence belongs to the pannexin family. Heterooligomer of Inx2 and ogre. As to expression, in ovary, expressed in follicle cells. Expressed around the periphery of the embryo during cellular blastoderm formation. Repeating epidermal pattern emerges from stage 11, high levels of expression detected along the borders of each segment from stage 13. At stage 13, expressed in the dorsal branch of the tracheal system. During stage 15, detected in a few cells at each of the branch points of the dorsal trunk and at low levels in cardioblasts. In embryos, also expressed in the salivary gland and the hindgut (at protein level). At stage 17, expressed in the dorsal side of the CNS. Expressed in the imaginal wing disk. Expressed in larval CNS and in tissues outside of the CNS. In pupae, expressed in the CNS and in primary, secondary and tertiary pigment cells of the retina.

It localises to the cell membrane. Its subcellular location is the cell junction. It is found in the gap junction. The protein resides in the basolateral cell membrane. In terms of biological role, structural component of the gap junctions. Essential for generation and/or maintenance of postembryonic neuroblasts and normal development of optic lobe. This chain is Innexin inx1 (ogre), found in Drosophila melanogaster (Fruit fly).